Reading from the N-terminus, the 248-residue chain is Mannose-binding protein C (248 aa).

Positions 1 to 20 (MSLFPSLPLLLLSVVATSYS) are cleaved as a signal peptide. The Collagen-like domain maps to 42 to 99 (GINGFPGKDGRDGTKGEKGEPGQGLRGLQGPPGKLGPPGNPGPSGSPGPKGQKGDPGE). The tract at residues 43-111 (INGFPGKDGR…DCDSSLAASE (69 aa)) is disordered. Pro47 carries the post-translational modification 4-hydroxyproline. Residues 49–61 (KDGRDGTKGEKGE) show a composition bias toward basic and acidic residues. 4 positions are modified to 4-hydroxyproline: Pro73, Pro79, Pro82, and Pro88. Pro residues predominate over residues 75–87 (KLGPPGNPGPSGS). A coiled-coil region spans residues 112–130 (RKALQTEMAHIKKWLTFSL). Residues 134–245 (VGNKFFLTNG…CSSSHLALCE (112 aa)) form the C-type lectin domain. 2 cysteine pairs are disulfide-bonded: Cys155–Cys244 and Cys222–Cys236.

As to quaternary structure, oligomeric complex of 3 or more homotrimers. Interacts with MASP1 and MASP2. Interacts with MEP1A and MEP1B and may inhibit their catalytic activity. Hydroxylation on proline residues within the sequence motif, GXPG, is most likely to be 4-hydroxy as this fits the requirement for 4-hydroxylation in vertebrates.

It localises to the secreted. Functionally, calcium-dependent lectin involved in innate immune defense. Binds mannose, fucose and N-acetylglucosamine on different microorganisms and activates the lectin complement pathway. Binds to late apoptotic cells, as well as to apoptotic blebs and to necrotic cells, but not to early apoptotic cells, facilitating their uptake by macrophages. The polypeptide is Mannose-binding protein C (MBL2) (Trachypithecus obscurus (Dusky leaf-monkey)).